Consider the following 392-residue polypeptide: Cytochrome b (392 aa).

4 helical membrane passes run 38 to 58, 82 to 104, 119 to 139, and 185 to 205; these read FGSLAGICLVIQIVTGVFLAM, WLLRYMHANGASMFLIVVHLHIF, VRCLGVVIFLLMIVTAFTGYV, and FFSLHHLLPFILVGASLLHLA. Residues histidine 88 and histidine 102 each contribute to the heme b site. Histidine 189 and histidine 203 together coordinate heme b. An a ubiquinone-binding site is contributed by histidine 208. Helical transmembrane passes span 231–251, 295–315, 327–347, and 354–373; these read FYVKDLVGWVAFAIFFSIWIF, SGGVAAIAPVFICLLALPFFK, IHQGIFWLLLADRLLLGWIGC, and FVTIGQIPPFVFFLFFAITP.

The protein belongs to the cytochrome b family. In terms of assembly, the main subunits of complex b-c1 are: cytochrome b, cytochrome c1 and the Rieske protein. The cofactor is heme b.

Its subcellular location is the mitochondrion inner membrane. Component of the ubiquinol-cytochrome c reductase complex (complex III or cytochrome b-c1 complex) that is part of the mitochondrial respiratory chain. The b-c1 complex mediates electron transfer from ubiquinol to cytochrome c. Contributes to the generation of a proton gradient across the mitochondrial membrane that is then used for ATP synthesis. The sequence is that of Cytochrome b (MT-CYB) from Pisum sativum (Garden pea).